A 353-amino-acid chain; its full sequence is Photosystem II protein D1 (353 aa).

T2 carries the post-translational modification N-acetylthreonine. A Phosphothreonine modification is found at T2. A run of 3 helical transmembrane segments spans residues Y29–S46, H118–L133, and W142–A156. H118 serves as a coordination point for chlorophyll a. A pheophytin a-binding site is contributed by Y126. Residues D170 and E189 each contribute to the [CaMn4O5] cluster site. A helical transmembrane segment spans residues F197 to L218. Residue H198 coordinates chlorophyll a. Residues H215 and S264–F265 each bind a quinone. H215 is a binding site for Fe cation. A Fe cation-binding site is contributed by H272. A helical transmembrane segment spans residues F274–L288. H332, E333, D342, and A344 together coordinate [CaMn4O5] cluster. The propeptide occupies A345–G353.

This sequence belongs to the reaction center PufL/M/PsbA/D family. In terms of assembly, PSII is composed of 1 copy each of membrane proteins PsbA, PsbB, PsbC, PsbD, PsbE, PsbF, PsbH, PsbI, PsbJ, PsbK, PsbL, PsbM, PsbT, PsbX, PsbY, PsbZ, Psb30/Ycf12, at least 3 peripheral proteins of the oxygen-evolving complex and a large number of cofactors. It forms dimeric complexes. The cofactor is The D1/D2 heterodimer binds P680, chlorophylls that are the primary electron donor of PSII, and subsequent electron acceptors. It shares a non-heme iron and each subunit binds pheophytin, quinone, additional chlorophylls, carotenoids and lipids. D1 provides most of the ligands for the Mn4-Ca-O5 cluster of the oxygen-evolving complex (OEC). There is also a Cl(-1) ion associated with D1 and D2, which is required for oxygen evolution. The PSII complex binds additional chlorophylls, carotenoids and specific lipids.. Phosphorylated in both bundle sheath and mesophyll cells, phosphorylation increases when cells are grown under high rather than low light regimes (70 vs 900 umol photons/m-2/s). In terms of processing, PSII is subject to light-induced damage, in particular to D1. Damaged protein is degraded by Deg1 and FtsH proteases and replaced. In maize mesophyll cells D1 degradation is less extensive in grana (stacked) vs stroma (unstacked) lamellae, in part due to exclusion of FtsH from the grana. D1 degradation is faster in bundle sheath cells. Post-translationally, tyr-161 forms a radical intermediate that is referred to as redox-active TyrZ, YZ or Y-Z. C-terminally processed by CTPA; processing is essential to allow assembly of the oxygen-evolving complex and thus photosynthetic growth.

The protein resides in the plastid. It localises to the chloroplast thylakoid membrane. The catalysed reaction is 2 a plastoquinone + 4 hnu + 2 H2O = 2 a plastoquinol + O2. Photosystem II (PSII) is a light-driven water:plastoquinone oxidoreductase that uses light energy to abstract electrons from H(2)O, generating O(2) and a proton gradient subsequently used for ATP formation. It consists of a core antenna complex that captures photons, and an electron transfer chain that converts photonic excitation into a charge separation. The D1/D2 (PsbA/PsbD) reaction center heterodimer binds P680, the primary electron donor of PSII as well as several subsequent electron acceptors. This is Photosystem II protein D1 from Zea mays (Maize).